Here is a 202-residue protein sequence, read N- to C-terminus: Probable pathogenesis-related protein CaO19.2336 (202 aa).

Positions 1-20 (MKTLLFIYLQLLLLLSIIIG) are cleaved as a signal peptide. N58 and N152 each carry an N-linked (GlcNAc...) asparagine glycan. One can recognise an SCP domain in the interval 66 to 179 (LKEHNNKRKL…LNALYIVCSY (114 aa)).

This sequence belongs to the CRISP family.

The protein resides in the secreted. Functionally, secreted protein that acts as a virulence factor during infections. This is Probable pathogenesis-related protein CaO19.2336 from Candida albicans (strain SC5314 / ATCC MYA-2876) (Yeast).